The following is a 116-amino-acid chain: Iron-sulfur cluster assembly protein CyaY (116 aa).

The protein belongs to the frataxin family.

Functionally, involved in iron-sulfur (Fe-S) cluster assembly. May act as a regulator of Fe-S biogenesis. The chain is Iron-sulfur cluster assembly protein CyaY from Polaromonas sp. (strain JS666 / ATCC BAA-500).